The following is a 157-amino-acid chain: UPF0262 protein Avi_0642 (157 aa).

The protein belongs to the UPF0262 family.

The polypeptide is UPF0262 protein Avi_0642 (Allorhizobium ampelinum (strain ATCC BAA-846 / DSM 112012 / S4) (Agrobacterium vitis (strain S4))).